The sequence spans 75 residues: Large ribosomal subunit protein bL28c (75 aa).

The protein belongs to the bacterial ribosomal protein bL28 family.

It localises to the plastid. The protein localises to the chloroplast. The polypeptide is Large ribosomal subunit protein bL28c (Cyanidioschyzon merolae (strain NIES-3377 / 10D) (Unicellular red alga)).